The sequence spans 255 residues: MQFDIVTLFPDMFRALTDWGITSRAAKQERYGLRTWNPRDFTTDNYRTIDDRPYGGGPGMVMLARPLEDAINAAKAAQAEQGIGGARVVMMSPQGATLNHDKVMRFAAEPGLILLCGRYEAIDQRLIDRVVDEEVSLGDFVLSGGELPAMALIDAVVRHLPGVLNDAQSAVQDSFVDGLLDCPHYTRPEEYDGVRVPDVLLGGHHAEIEQWRRREALRNTWLKRPDLIVQARKNKLLSRADEAWLASLAKDASKH.

Residues G117 and 137-142 (LGDFVL) contribute to the S-adenosyl-L-methionine site.

Belongs to the RNA methyltransferase TrmD family. Homodimer.

The protein resides in the cytoplasm. It catalyses the reaction guanosine(37) in tRNA + S-adenosyl-L-methionine = N(1)-methylguanosine(37) in tRNA + S-adenosyl-L-homocysteine + H(+). Its function is as follows. Specifically methylates guanosine-37 in various tRNAs. The sequence is that of tRNA (guanine-N(1)-)-methyltransferase from Paraburkholderia phymatum (strain DSM 17167 / CIP 108236 / LMG 21445 / STM815) (Burkholderia phymatum).